A 205-amino-acid polypeptide reads, in one-letter code: Imidazoleglycerol-phosphate dehydratase (205 aa).

Belongs to the imidazoleglycerol-phosphate dehydratase family.

The protein localises to the cytoplasm. The enzyme catalyses D-erythro-1-(imidazol-4-yl)glycerol 3-phosphate = 3-(imidazol-4-yl)-2-oxopropyl phosphate + H2O. The protein operates within amino-acid biosynthesis; L-histidine biosynthesis; L-histidine from 5-phospho-alpha-D-ribose 1-diphosphate: step 6/9. The protein is Imidazoleglycerol-phosphate dehydratase of Chloroflexus aggregans (strain MD-66 / DSM 9485).